We begin with the raw amino-acid sequence, 411 residues long: Argininosuccinate synthase (411 aa).

ATP-binding positions include 11–19 (AYSGGLDTS) and Ala-37. Positions 88 and 93 each coordinate L-citrulline. Residue 116–124 (SHGATGKGN) participates in ATP binding. L-aspartate contacts are provided by Thr-120, Asn-124, and Asp-125. Asn-124 is a binding site for L-citrulline. L-citrulline contacts are provided by Arg-128, Ser-181, Ser-190, Glu-271, and Tyr-283.

The protein belongs to the argininosuccinate synthase family. As to quaternary structure, homotetramer.

The protein localises to the cytoplasm. Its subcellular location is the cytosol. It carries out the reaction L-citrulline + L-aspartate + ATP = 2-(N(omega)-L-arginino)succinate + AMP + diphosphate + H(+). Its pathway is amino-acid biosynthesis; L-arginine biosynthesis; L-arginine from L-ornithine and carbamoyl phosphate: step 2/3. The protein operates within nitrogen metabolism; urea cycle; (N(omega)-L-arginino)succinate from L-aspartate and L-citrulline: step 1/1. Functionally, one of the enzymes of the urea cycle, the metabolic pathway transforming neurotoxic amonia produced by protein catabolism into inocuous urea in the liver of ureotelic animals. Catalyzes the formation of arginosuccinate from aspartate, citrulline and ATP and together with ASL it is responsible for the biosynthesis of arginine in most body tissues. The sequence is that of Argininosuccinate synthase from Xenopus laevis (African clawed frog).